The following is a 140-amino-acid chain: Small ribosomal subunit protein uS8c (140 aa).

It belongs to the universal ribosomal protein uS8 family. Part of the 30S ribosomal subunit.

The protein localises to the plastid. The protein resides in the chloroplast. One of the primary rRNA binding proteins, it binds directly to 16S rRNA central domain where it helps coordinate assembly of the platform of the 30S subunit. The sequence is that of Small ribosomal subunit protein uS8c (rps8) from Euglena gracilis.